A 287-amino-acid polypeptide reads, in one-letter code: 4-hydroxybenzoate octaprenyltransferase (287 aa).

The next 9 membrane-spanning stretches (helical) occupy residues 19 to 39 (PIGT…ASSG), 43 to 63 (LQML…GCAI), 94 to 114 (VVVA…LNIF), 118 to 138 (LSVL…FLAI), 142 to 162 (VLGI…LDFI), 167 to 187 (WVLF…YAMV), 209 to 229 (VLAI…VAHL), 235 to 255 (YFLI…KLVS), and 263 to 283 (FLAF…IVLG).

It belongs to the UbiA prenyltransferase family. The cofactor is Mg(2+).

Its subcellular location is the cell inner membrane. It carries out the reaction all-trans-octaprenyl diphosphate + 4-hydroxybenzoate = 4-hydroxy-3-(all-trans-octaprenyl)benzoate + diphosphate. It participates in cofactor biosynthesis; ubiquinone biosynthesis. Its function is as follows. Catalyzes the prenylation of para-hydroxybenzoate (PHB) with an all-trans polyprenyl group. Mediates the second step in the final reaction sequence of ubiquinone-8 (UQ-8) biosynthesis, which is the condensation of the polyisoprenoid side chain with PHB, generating the first membrane-bound Q intermediate 3-octaprenyl-4-hydroxybenzoate. This Polynucleobacter asymbioticus (strain DSM 18221 / CIP 109841 / QLW-P1DMWA-1) (Polynucleobacter necessarius subsp. asymbioticus) protein is 4-hydroxybenzoate octaprenyltransferase.